We begin with the raw amino-acid sequence, 87 residues long: DNA/RNA-binding protein Alba (87 aa).

Position 9 is an N6-acetyllysine (lysine 9).

The protein belongs to the histone-like Alba family. Acetylated. Acetylation at Lys-9 decreases DNA-binding affinity.

The protein resides in the cytoplasm. Its subcellular location is the chromosome. In terms of biological role, binds double-stranded DNA tightly but without sequence specificity. Involved in DNA compaction. The chain is DNA/RNA-binding protein Alba from Methanocaldococcus jannaschii (strain ATCC 43067 / DSM 2661 / JAL-1 / JCM 10045 / NBRC 100440) (Methanococcus jannaschii).